We begin with the raw amino-acid sequence, 525 residues long: MAGLWLGLVWQKLLLWGAASALSLAGASLVLSLLQRVASYARKWQQMRPIPTVARAYPLVGHALLMKPDGREFFQQIIEYTEEYRHMPLLKLWVGPVPMVALYNAENVEVILTSSKQIDKSSMYKFLEPWLGLGLLTSTGNKWRSRRKMLTPTFHFTILEDFLDIMNEQANILVKKLEKHINQEAFNCFFYITLCALDIICETAMGKNIGAQSNDDSEYVRAVYRMSEMIFRRIKMPWLWLDLWYLMFKEGWEHKKSLQILHTFTNSVIAERANEMNANEDCRGDGRGSAPSKNKRRAFLDLLLSVTDDEGNRLSHEDIREEVDTFMFEGHDTTAAAINWSLYLLGSNPEVQKKVDHELDDVFGKSDRPATVEDLKKLRYLECVIKETLRLFPSVPLFARSVSEDCEVAGYRVLKGTEAVIIPYALHRDPRYFPNPEEFQPERFFPENAQGRHPYAYVPFSAGPRNCIGQKFAVMEEKTILSCILRHFWIESNQKREELGLEGQLILRPSNGIWIKLKRRNADER.

The helical transmembrane segment at 13–33 threads the bilayer; it reads LLLWGAASALSLAGASLVLSL. Heme is bound by residues glutamate 329 and cysteine 467.

The protein belongs to the cytochrome P450 family. Requires heme as cofactor. In terms of tissue distribution, broadly expressed. Detected in heart, brain, placenta, lung, liver, skeletal muscle, kidney, pancreas, retina, retinal pigment epithelium (RPE) and lymphocytes.

It is found in the endoplasmic reticulum membrane. It carries out the reaction dodecanoate + reduced [NADPH--hemoprotein reductase] + O2 = 12-hydroxydodecanoate + oxidized [NADPH--hemoprotein reductase] + H2O + H(+). The catalysed reaction is tetradecanoate + reduced [NADPH--hemoprotein reductase] + O2 = 14-hydroxytetradecanoate + oxidized [NADPH--hemoprotein reductase] + H2O + H(+). It catalyses the reaction hexadecanoate + reduced [NADPH--hemoprotein reductase] + O2 = 16-hydroxyhexadecanoate + oxidized [NADPH--hemoprotein reductase] + H2O + H(+). The enzyme catalyses (5Z,8Z,11Z,14Z,17Z)-eicosapentaenoate + reduced [NADPH--hemoprotein reductase] + O2 = 20-hydroxy-(5Z,8Z,11Z,14Z,17Z)-eicosapentaenoate + oxidized [NADPH--hemoprotein reductase] + H2O + H(+). It carries out the reaction (4Z,7Z,10Z,13Z,16Z,19Z)-docosahexaenoate + reduced [NADPH--hemoprotein reductase] + O2 = 22-hydroxy-(4Z,7Z,10Z,13Z,16Z,19Z)-docosahexaenoate + oxidized [NADPH--hemoprotein reductase] + H2O + H(+). It participates in lipid metabolism; fatty acid metabolism. Its activity is regulated as follows. Inhibited by N-hydroxy-N'-(4-n-butyl-2-methylphenyl formamidine)(HET0016) with an IC(50) of 38 nM. Functionally, a cytochrome P450 monooxygenase involved in fatty acid metabolism in the eye. Catalyzes the omega-hydroxylation of polyunsaturated fatty acids (PUFAs) docosahexaenoate (DHA) and its precursor eicosapentaenoate (EPA), and may contribute to the homeostasis of these retinal PUFAs. Omega hydroxylates saturated fatty acids such as laurate, myristate and palmitate, the catalytic efficiency decreasing in the following order: myristate &gt; laurate &gt; palmitate (C14&gt;C12&gt;C16). Mechanistically, uses molecular oxygen inserting one oxygen atom into a substrate, and reducing the second into a water molecule, with two electrons provided by NADPH via cytochrome P450 reductase (CPR; NADPH-ferrihemoprotein reductase). The protein is Cytochrome P450 4V2 (CYP4V2) of Homo sapiens (Human).